The following is a 119-amino-acid chain: 5-hydroxyisourate hydrolase (119 aa).

3 residues coordinate substrate: histidine 8, arginine 47, and tyrosine 116.

The protein belongs to the transthyretin family. 5-hydroxyisourate hydrolase subfamily. In terms of assembly, homotetramer.

The enzyme catalyses 5-hydroxyisourate + H2O = 5-hydroxy-2-oxo-4-ureido-2,5-dihydro-1H-imidazole-5-carboxylate + H(+). The protein operates within purine metabolism; urate degradation; (S)-allantoin from urate: step 2/3. Its function is as follows. Catalyzes the hydrolysis of 5-hydroxyisourate (HIU) to 2-oxo-4-hydroxy-4-carboxy-5-ureidoimidazoline (OHCU). The polypeptide is 5-hydroxyisourate hydrolase (Halalkalibacterium halodurans (strain ATCC BAA-125 / DSM 18197 / FERM 7344 / JCM 9153 / C-125) (Bacillus halodurans)).